Consider the following 139-residue polypeptide: Putative nickel-responsive regulator (139 aa).

Residues His-79, His-90, His-92, and Cys-98 each contribute to the Ni(2+) site.

The protein belongs to the transcriptional regulatory CopG/NikR family. Ni(2+) is required as a cofactor.

Its function is as follows. Transcriptional regulator. The sequence is that of Putative nickel-responsive regulator from Nitratidesulfovibrio vulgaris (strain ATCC 29579 / DSM 644 / CCUG 34227 / NCIMB 8303 / VKM B-1760 / Hildenborough) (Desulfovibrio vulgaris).